The following is a 118-amino-acid chain: Galanin peptides (118 aa).

Residues 1–19 form the signal peptide; the sequence is MHRCVGGVCVSLIVCAFLT. A propeptide spanning residues 20 to 30 is cleaved from the precursor; the sequence is ETLGMVIAAKE. At Ala-61 the chain carries Alanine amide.

It belongs to the galanin family. In terms of tissue distribution, strongly expressed in brain and stomach, moderately in the eye, and very weakly in heart, kidney and gills. Not detected in liver.

Its subcellular location is the secreted. In terms of biological role, endocrine hormone of the central and peripheral nervous systems that binds and activates the G protein-coupled receptors GALR1 (galr1a and galr1b) and GALR2 (galr2a and galr2b). This small neuropeptide may regulate diverse physiologic functions including contraction of smooth muscle of the gastrointestinal and genitourinary tract, growth hormone and insulin release and adrenal secretion. The protein is Galanin peptides of Danio rerio (Zebrafish).